The primary structure comprises 404 residues: Argininosuccinate synthase (404 aa).

ATP contacts are provided by residues 10–18 (AYSGGVDTS) and Ala38. Tyr89 lines the L-citrulline pocket. Gly119 provides a ligand contact to ATP. Positions 121, 125, and 126 each coordinate L-aspartate. Asn125 is a binding site for L-citrulline. L-citrulline is bound by residues Arg129, Ser177, Ser186, Glu262, and Tyr274.

It belongs to the argininosuccinate synthase family. Type 1 subfamily. Homotetramer.

It localises to the cytoplasm. The enzyme catalyses L-citrulline + L-aspartate + ATP = 2-(N(omega)-L-arginino)succinate + AMP + diphosphate + H(+). The protein operates within amino-acid biosynthesis; L-arginine biosynthesis; L-arginine from L-ornithine and carbamoyl phosphate: step 2/3. The polypeptide is Argininosuccinate synthase (Prochlorococcus marinus subsp. pastoris (strain CCMP1986 / NIES-2087 / MED4)).